The following is a 254-amino-acid chain: MKTPARRSKRVNQEESETNVTTRVVLRTRKTNCSKTRAARVRPDYPLTRTTSESEMKLMPPEFFQIDALDLAPRLLGKFMRRDNVVLRITEVEAYRPNDSACHGRFGVTPRTAPVFGPGGHAYVYLCYGLHMMLNIVADKEGVGAAVLIRSCSPVSGMETIQERRGLKTDKPVLLNGPGKVGQALGLSTEWSHHPLYSPGGLELLDGGEDVEKVMVGPRVGIDYALPEHVNALWRFAVADTPWISAPKNTLKPL.

Over residues 1-10 (MKTPARRSKR) the composition is skewed to basic residues. Residues 1 to 20 (MKTPARRSKRVNQEESETNV) are disordered.

The protein belongs to the DNA glycosylase MPG family.

Its subcellular location is the nucleus. It catalyses the reaction Hydrolysis of alkylated DNA, releasing 3-methyladenine, 3-methylguanine, 7-methylguanine and 7-methyladenine.. Its function is as follows. Hydrolysis of the deoxyribose N-glycosidic bond to excise 3-methyladenine, and 7-methylguanine from the damaged DNA polymer formed by alkylation lesions. The sequence is that of DNA-3-methyladenine glycosylase (MAG) from Arabidopsis thaliana (Mouse-ear cress).